The following is a 416-amino-acid chain: Multifunctional CCA protein (416 aa).

Positions 8 and 11 each coordinate ATP. The CTP site is built by Gly-8 and Arg-11. Residues Asp-21 and Asp-23 each coordinate Mg(2+). Residues Arg-91, Arg-137, and Arg-140 each coordinate ATP. Residues Arg-91, Arg-137, and Arg-140 each contribute to the CTP site. One can recognise an HD domain in the interval 228-329 (TGLHTMMVLA…IKLFDKADFW (102 aa)).

The protein belongs to the tRNA nucleotidyltransferase/poly(A) polymerase family. Bacterial CCA-adding enzyme type 1 subfamily. As to quaternary structure, monomer. Can also form homodimers and oligomers. Mg(2+) is required as a cofactor. It depends on Ni(2+) as a cofactor.

The enzyme catalyses a tRNA precursor + 2 CTP + ATP = a tRNA with a 3' CCA end + 3 diphosphate. It carries out the reaction a tRNA with a 3' CCA end + 2 CTP + ATP = a tRNA with a 3' CCACCA end + 3 diphosphate. Catalyzes the addition and repair of the essential 3'-terminal CCA sequence in tRNAs without using a nucleic acid template. Adds these three nucleotides in the order of C, C, and A to the tRNA nucleotide-73, using CTP and ATP as substrates and producing inorganic pyrophosphate. tRNA 3'-terminal CCA addition is required both for tRNA processing and repair. Also involved in tRNA surveillance by mediating tandem CCA addition to generate a CCACCA at the 3' terminus of unstable tRNAs. While stable tRNAs receive only 3'-terminal CCA, unstable tRNAs are marked with CCACCA and rapidly degraded. This is Multifunctional CCA protein from Shewanella sp. (strain MR-7).